Consider the following 192-residue polypeptide: Cytochrome b-245 light chain (192 aa).

Over 2–7 (GQIEWA) the chain is Cytoplasmic. Residues 8–30 (MWANEQALASGLILITGGIVATA) form a helical membrane-spanning segment. Over 31–35 (GQFAQ) the chain is Extracellular. The helical transmembrane segment at 36-53 (WYLGAYSIAAGVLICLLE) threads the bilayer. Residues 54-69 (YPRGKRSKGSTMERCG) are Cytoplasmic-facing. An intramembrane segment occupies 70–80 (QKYLTRAVKVF). At 81–86 (GPLTSN) the chain is on the cytoplasmic side. A helical transmembrane segment spans residues 87 to 104 (YYIRAFLHLGLSVPAGFL). A topological domain (extracellular) is located at residue Leu-105. The helical transmembrane segment at 106–126 (ATILGTACLAIASSIYLLAAI) threads the bilayer. The Cytoplasmic portion of the chain corresponds to 127-192 (HGEHWTPIET…NPMPVTDEVV (66 aa)). The tract at residues 134–192 (IETKPKERPQVGGTIKQPPSNPPPRPPAEARKKPSEEEVAGVPGGGPQENPMPVTDEVV) is disordered. Position 147 is a phosphothreonine (Thr-147). Residue Lys-149 forms a Glycyl lysine isopeptide (Lys-Gly) (interchain with G-Cter in ubiquitin) linkage. Ser-168 is modified (phosphoserine).

The protein belongs to the p22phox family. As to quaternary structure, component of the phagocyte NADPH oxidase core complex/cytochrome b558 complex, composed of CYBB (heavy chain (beta)) and CYBA (light chain (alpha)). Component of the phagocyte NADPH oxidase complex composed of an obligatory core heterodimer formed by the membrane proteins CYBA and CYBB and the cytosolic regulatory subunits NCF1/p47-phox, NCF2/p67-phox, NCF4/p40-phox and the small GTPase RAC1 or RAC2. Interacts with NCF1 (via SH3 domain). Interacts with SH3PXD2A. Interacts with DUOX1, DUOX2 and TPO. Interacts with NOX4; this interaction mediates superoxide generation. Interacts with calprotectin (S100A8/9). Interacts with GBP7. Interacts with NOXO1. Forms a heterodimer with NOX3 and is essential for activity and cell membrane localization of NOX3. Interacts with NOX1. Post-translationally, phosphorylation at Thr-147 enhances NADPH oxidase activity by promoting NCF1/p47-phox binding. Ubiquitinated at Lys-149 likely by RNF145.

The protein resides in the cell membrane. In terms of biological role, subunit of NADPH oxidase complexes that is required for the NADPH oxidase activity that generates, in various cell types, superoxide from molecular oxygen utilizing NADPH as an electron donor. Subunit of the phagocyte NADPH oxidase complex that mediates the transfer of electrons from cytosolic NADPH to O2 to produce the superoxide anion (O2(-)). In the activated complex, electrons are first transferred from NADPH to flavin adenine dinucleotide (FAD) and subsequently transferred via two heme molecules to molecular oxygen, producing superoxide through an outer-sphere reaction. Activation of the NADPH oxidase complex is initiated by the assembly of cytosolic subunits of the NADPH oxidase complex with the core NADPH oxidase complex to form a complex at the plasma membrane or phagosomal membrane. This activation process is initiated by phosphorylation dependent binding of the cytosolic NCF1/p47-phox subunit to the C-terminus of CYBA/p22-phox. Aassociates with NOX3 to form a functional NADPH oxidase constitutively generating superoxide. The sequence is that of Cytochrome b-245 light chain from Tursiops truncatus (Atlantic bottle-nosed dolphin).